Here is a 293-residue protein sequence, read N- to C-terminus: uncharacterized protein (293 aa).

A coiled-coil region spans residues 65-89 (LQKYLENIKNKKLNLNKQSNNQTNN). The interval 81–112 (KQSNNQTNNQTNNQTNNQTNNQTNNIRPQINN) is disordered.

Its subcellular location is the virion. This is an uncharacterized protein from Acanthamoeba polyphaga mimivirus (APMV).